The following is a 328-amino-acid chain: Biotin synthase (328 aa).

The 225-residue stretch at 49 to 273 (FNKEKIETCS…ICISRIIMPE (225 aa)) folds into the Radical SAM core domain. Residues cysteine 67, cysteine 71, and cysteine 74 each coordinate [4Fe-4S] cluster. 4 residues coordinate [2Fe-2S] cluster: serine 110, cysteine 142, cysteine 201, and arginine 277.

The protein belongs to the radical SAM superfamily. Biotin synthase family. Homodimer. [4Fe-4S] cluster serves as cofactor. Requires [2Fe-2S] cluster as cofactor.

It catalyses the reaction (4R,5S)-dethiobiotin + (sulfur carrier)-SH + 2 reduced [2Fe-2S]-[ferredoxin] + 2 S-adenosyl-L-methionine = (sulfur carrier)-H + biotin + 2 5'-deoxyadenosine + 2 L-methionine + 2 oxidized [2Fe-2S]-[ferredoxin]. It participates in cofactor biosynthesis; biotin biosynthesis; biotin from 7,8-diaminononanoate: step 2/2. In terms of biological role, catalyzes the conversion of dethiobiotin (DTB) to biotin by the insertion of a sulfur atom into dethiobiotin via a radical-based mechanism. The polypeptide is Biotin synthase (Methanococcus vannielii (strain ATCC 35089 / DSM 1224 / JCM 13029 / OCM 148 / SB)).